Here is a 165-residue protein sequence, read N- to C-terminus: Large ribosomal subunit protein uL11A (165 aa).

The residue at position 2 (proline 2) is a N,N-dimethylproline; by NTM1. Lysine 4 and lysine 11 each carry N6,N6,N6-trimethyllysine; by RKM2. Phosphoserine occurs at positions 25 and 38. An N5-methylarginine; by RMT2 modification is found at arginine 67. Residues lysine 130 and lysine 146 each participate in a glycyl lysine isopeptide (Lys-Gly) (interchain with G-Cter in ubiquitin) cross-link.

The protein belongs to the universal ribosomal protein uL11 family. Component of the large ribosomal subunit (LSU). Mature yeast ribosomes consist of a small (40S) and a large (60S) subunit. The 40S small subunit contains 1 molecule of ribosomal RNA (18S rRNA) and 33 different proteins (encoded by 57 genes). The large 60S subunit contains 3 rRNA molecules (25S, 5.8S and 5S rRNA) and 46 different proteins (encoded by 81 genes). In terms of processing, it appears that the main modified species for L12 contains 6 methyl groups, 2 on Pro-2, 3 on Lys-4 and 1 on Arg-67. Although not reproduced with a second method, methylation at Lys-11 cannot be ruled out.

It is found in the cytoplasm. Component of the ribosome, a large ribonucleoprotein complex responsible for the synthesis of proteins in the cell. The small ribosomal subunit (SSU) binds messenger RNAs (mRNAs) and translates the encoded message by selecting cognate aminoacyl-transfer RNA (tRNA) molecules. The large subunit (LSU) contains the ribosomal catalytic site termed the peptidyl transferase center (PTC), which catalyzes the formation of peptide bonds, thereby polymerizing the amino acids delivered by tRNAs into a polypeptide chain. The nascent polypeptides leave the ribosome through a tunnel in the LSU and interact with protein factors that function in enzymatic processing, targeting, and the membrane insertion of nascent chains at the exit of the ribosomal tunnel. This Saccharomyces cerevisiae (strain ATCC 204508 / S288c) (Baker's yeast) protein is Large ribosomal subunit protein uL11A.